The following is a 482-amino-acid chain: Aspartyl/glutamyl-tRNA(Asn/Gln) amidotransferase subunit B (482 aa).

The protein belongs to the GatB/GatE family. GatB subfamily. Heterotrimer of A, B and C subunits.

The catalysed reaction is L-glutamyl-tRNA(Gln) + L-glutamine + ATP + H2O = L-glutaminyl-tRNA(Gln) + L-glutamate + ADP + phosphate + H(+). The enzyme catalyses L-aspartyl-tRNA(Asn) + L-glutamine + ATP + H2O = L-asparaginyl-tRNA(Asn) + L-glutamate + ADP + phosphate + 2 H(+). Its function is as follows. Allows the formation of correctly charged Asn-tRNA(Asn) or Gln-tRNA(Gln) through the transamidation of misacylated Asp-tRNA(Asn) or Glu-tRNA(Gln) in organisms which lack either or both of asparaginyl-tRNA or glutaminyl-tRNA synthetases. The reaction takes place in the presence of glutamine and ATP through an activated phospho-Asp-tRNA(Asn) or phospho-Glu-tRNA(Gln). This is Aspartyl/glutamyl-tRNA(Asn/Gln) amidotransferase subunit B from Thermotoga sp. (strain RQ2).